A 227-amino-acid polypeptide reads, in one-letter code: Ribonuclease 3 (227 aa).

One can recognise an RNase III domain in the interval 4–133 (FEKLETLLGY…LIAAIYLDSN (130 aa)). Position 46 (Glu-46) interacts with Mg(2+). Asp-50 is a catalytic residue. The Mg(2+) site is built by Asn-119 and Glu-122. Residue Glu-122 is part of the active site. A DRBM domain is found at 158-226 (DPKTALQEWA…ARCLLHRLKN (69 aa)).

The protein belongs to the ribonuclease III family. As to quaternary structure, homodimer. It depends on Mg(2+) as a cofactor.

The protein localises to the cytoplasm. The enzyme catalyses Endonucleolytic cleavage to 5'-phosphomonoester.. In terms of biological role, digests double-stranded RNA. Involved in the processing of primary rRNA transcript to yield the immediate precursors to the large and small rRNAs (23S and 16S). Processes some mRNAs, and tRNAs when they are encoded in the rRNA operon. Processes pre-crRNA and tracrRNA of type II CRISPR loci if present in the organism. In Rickettsia typhi (strain ATCC VR-144 / Wilmington), this protein is Ribonuclease 3.